A 477-amino-acid chain; its full sequence is Glycogen synthase (477 aa).

Lysine 15 contacts ADP-alpha-D-glucose.

Belongs to the glycosyltransferase 1 family. Bacterial/plant glycogen synthase subfamily.

It catalyses the reaction [(1-&gt;4)-alpha-D-glucosyl](n) + ADP-alpha-D-glucose = [(1-&gt;4)-alpha-D-glucosyl](n+1) + ADP + H(+). It functions in the pathway glycan biosynthesis; glycogen biosynthesis. Functionally, synthesizes alpha-1,4-glucan chains using ADP-glucose. The protein is Glycogen synthase of Halorhodospira halophila (strain DSM 244 / SL1) (Ectothiorhodospira halophila (strain DSM 244 / SL1)).